Reading from the N-terminus, the 289-residue chain is Four and a half LIM domains protein 3 (289 aa).

S2 bears the N-acetylserine mark. The C4-type zinc-finger motif lies at 7–31 (CAKCNESLYGRKYIQTDSGPYCVPC). LIM zinc-binding domains are found at residues 40–92 (CAEC…CNEC) and 101–153 (CSAC…CVPC). K157 bears the N6-acetyllysine mark. LIM zinc-binding domains are found at residues 162-212 (CARC…CVAC) and 221-275 (CSSC…FVPD). At K244 the chain carries N6-acetyllysine.

Interacts with SOX15; the interaction recruits FHL3 to FOXK1 promoters where it acts as a transcriptional coactivator of FOXK1. As to expression, expressed in myogenic progenitor cells (at protein level). Expressed in skeletal striated muscle and the heart. Expressed to a lesser extent, in lung, and kidney. Expressed in skin and skeletal muscles such as the masseter, tongue, tibialis anterior and plantar muscles.

Its subcellular location is the nucleus. It is found in the cytoplasm. In terms of biological role, recruited by SOX15 to FOXK1 promoters where it acts as a transcriptional coactivator of FOXK1. The protein is Four and a half LIM domains protein 3 (Fhl3) of Mus musculus (Mouse).